Reading from the N-terminus, the 150-residue chain is Large ribosomal subunit protein bL9 (150 aa).

It belongs to the bacterial ribosomal protein bL9 family.

Binds to the 23S rRNA. The protein is Large ribosomal subunit protein bL9 of Cupriavidus taiwanensis (strain DSM 17343 / BCRC 17206 / CCUG 44338 / CIP 107171 / LMG 19424 / R1) (Ralstonia taiwanensis (strain LMG 19424)).